A 117-amino-acid polypeptide reads, in one-letter code: Ribosome-binding factor A (117 aa).

Belongs to the RbfA family. Monomer. Binds 30S ribosomal subunits, but not 50S ribosomal subunits or 70S ribosomes.

The protein resides in the cytoplasm. Functionally, one of several proteins that assist in the late maturation steps of the functional core of the 30S ribosomal subunit. Associates with free 30S ribosomal subunits (but not with 30S subunits that are part of 70S ribosomes or polysomes). Required for efficient processing of 16S rRNA. May interact with the 5'-terminal helix region of 16S rRNA. In Bacillus subtilis (strain 168), this protein is Ribosome-binding factor A.